The sequence spans 242 residues: Probable 2-phosphosulfolactate phosphatase (242 aa).

It belongs to the ComB family. Mg(2+) serves as cofactor.

It catalyses the reaction (2R)-O-phospho-3-sulfolactate + H2O = (2R)-3-sulfolactate + phosphate. In Synechococcus sp. (strain JA-2-3B'a(2-13)) (Cyanobacteria bacterium Yellowstone B-Prime), this protein is Probable 2-phosphosulfolactate phosphatase.